Consider the following 419-residue polypeptide: Gamma-glutamyl phosphate reductase (419 aa).

This sequence belongs to the gamma-glutamyl phosphate reductase family.

It is found in the cytoplasm. The catalysed reaction is L-glutamate 5-semialdehyde + phosphate + NADP(+) = L-glutamyl 5-phosphate + NADPH + H(+). It participates in amino-acid biosynthesis; L-proline biosynthesis; L-glutamate 5-semialdehyde from L-glutamate: step 2/2. Its function is as follows. Catalyzes the NADPH-dependent reduction of L-glutamate 5-phosphate into L-glutamate 5-semialdehyde and phosphate. The product spontaneously undergoes cyclization to form 1-pyrroline-5-carboxylate. This chain is Gamma-glutamyl phosphate reductase, found in Yersinia pseudotuberculosis serotype O:1b (strain IP 31758).